Here is a 164-residue protein sequence, read N- to C-terminus: Interferon gamma (164 aa).

Residues 1–19 form the signal peptide; sequence MTCQTYNLFVLSVIMIYYG. N-linked (GlcNAc...) asparagine glycans are attached at residues Asn42 and Asn61.

The protein belongs to the type II (or gamma) interferon family. Homodimer.

The protein resides in the secreted. Produced by lymphocytes activated by specific antigens or mitogens. IFN-gamma, in addition to having antiviral activity, has important immunoregulatory functions. It is a potent activator of macrophages, it has antiproliferative effects on transformed cells and it can potentiate the antiviral and antitumor effects of the type I interferons. The protein is Interferon gamma (IFNG) of Coturnix japonica (Japanese quail).